Here is a 123-residue protein sequence, read N- to C-terminus: WAP four-disulfide core domain protein 5 (123 aa).

An N-terminal signal peptide occupies residues methionine 1–glycine 24. WAP domains follow at residues lysine 27–arginine 73 and valine 74–valine 121. Disulfide bonds link cysteine 34–cysteine 62, cysteine 41–cysteine 66, cysteine 49–cysteine 61, cysteine 55–cysteine 70, cysteine 81–cysteine 109, cysteine 88–cysteine 113, cysteine 96–cysteine 108, and cysteine 102–cysteine 117.

The protein resides in the secreted. Putative acid-stable proteinase inhibitor. The sequence is that of WAP four-disulfide core domain protein 5 (WFDC5) from Aotus nancymaae (Ma's night monkey).